The chain runs to 116 residues: NADH-quinone oxidoreductase subunit A (116 aa).

The next 3 helical transmembrane spans lie at 3 to 23, 61 to 81, and 88 to 108; these read FTFL…VIAL, FAIL…WAVV, and QGLV…AYAW.

The protein belongs to the complex I subunit 3 family. NDH-1 is composed of 14 different subunits. Subunits NuoA, H, J, K, L, M, N constitute the membrane sector of the complex.

Its subcellular location is the cell inner membrane. The enzyme catalyses a quinone + NADH + 5 H(+)(in) = a quinol + NAD(+) + 4 H(+)(out). Its function is as follows. NDH-1 shuttles electrons from NADH, via FMN and iron-sulfur (Fe-S) centers, to quinones in the respiratory chain. The immediate electron acceptor for the enzyme in this species is believed to be a menaquinone. Couples the redox reaction to proton translocation (for every two electrons transferred, four hydrogen ions are translocated across the cytoplasmic membrane), and thus conserves the redox energy in a proton gradient. In Bacteroides thetaiotaomicron (strain ATCC 29148 / DSM 2079 / JCM 5827 / CCUG 10774 / NCTC 10582 / VPI-5482 / E50), this protein is NADH-quinone oxidoreductase subunit A.